Here is a 234-residue protein sequence, read N- to C-terminus: Phosphoribosylformylglycinamidine synthase subunit PurQ (234 aa).

Residues 6-234 (VGVVVFPGSN…ESLFRSLTGV (229 aa)) form the Glutamine amidotransferase type-1 domain. The active-site Nucleophile is Cys89. Catalysis depends on residues His206 and Glu208.

As to quaternary structure, part of the FGAM synthase complex composed of 1 PurL, 1 PurQ and 2 PurS subunits.

Its subcellular location is the cytoplasm. The enzyme catalyses N(2)-formyl-N(1)-(5-phospho-beta-D-ribosyl)glycinamide + L-glutamine + ATP + H2O = 2-formamido-N(1)-(5-O-phospho-beta-D-ribosyl)acetamidine + L-glutamate + ADP + phosphate + H(+). It catalyses the reaction L-glutamine + H2O = L-glutamate + NH4(+). It functions in the pathway purine metabolism; IMP biosynthesis via de novo pathway; 5-amino-1-(5-phospho-D-ribosyl)imidazole from N(2)-formyl-N(1)-(5-phospho-D-ribosyl)glycinamide: step 1/2. In terms of biological role, part of the phosphoribosylformylglycinamidine synthase complex involved in the purines biosynthetic pathway. Catalyzes the ATP-dependent conversion of formylglycinamide ribonucleotide (FGAR) and glutamine to yield formylglycinamidine ribonucleotide (FGAM) and glutamate. The FGAM synthase complex is composed of three subunits. PurQ produces an ammonia molecule by converting glutamine to glutamate. PurL transfers the ammonia molecule to FGAR to form FGAM in an ATP-dependent manner. PurS interacts with PurQ and PurL and is thought to assist in the transfer of the ammonia molecule from PurQ to PurL. The chain is Phosphoribosylformylglycinamidine synthase subunit PurQ from Chlorobium chlorochromatii (strain CaD3).